Reading from the N-terminus, the 65-residue chain is UPF0291 protein BBR47_33060 (65 aa).

Belongs to the UPF0291 family.

It localises to the cytoplasm. This is UPF0291 protein BBR47_33060 from Brevibacillus brevis (strain 47 / JCM 6285 / NBRC 100599).